The chain runs to 151 residues: 3-hydroxyacyl-thioester dehydratase Z (151 aa).

One can recognise a MaoC-like domain in the interval 11 to 131 (AAAAGEKVGQ…TVQATVSTTV (121 aa)). Residues 60–63 (IAHG), 86–89 (AINY), 97–99 (PAP), glutamine 124, and arginine 148 each bind substrate.

The protein belongs to the enoyl-CoA hydratase/isomerase family. Homodimer.

The enzyme catalyses a (3R)-3-hydroxyacyl-CoA = a (2E)-enoyl-CoA + H2O. Its function is as follows. Shows trans-enoyl-CoA hydratase/3-hydroxyacyl-CoA dehydratase activity. This Mycobacterium bovis (strain ATCC BAA-935 / AF2122/97) protein is 3-hydroxyacyl-thioester dehydratase Z.